A 2411-amino-acid chain; its full sequence is MAKPVVKIDVEPESHFAKQVQSCFPQFEIEAVQTTPNDHAHARAFSHLATKLIEMETAKDQIILDIGSAPARRLYSEHKYHCVCPMKCTEDPERMLGYARKLIAGSAKGKAEKLRDLRDVLATPDIETQSLCLHTDASCRYRGDVAVYQDVYAIDAPTTLYHQALKGVRTAYWIGFDTTPFMYDALAGAYPLYSTNWADEQVLESRNIGLCSDKVSEGGKKGRSILRKKFLKQSDRVMFSVGSTLYTESRKLLQSWHLPSTFHLKGKSSFTCRCDTIVSCEGYVLKKITMCPGVTGKPIGYAVTHHKEGFVVGKVTDTIRGERVSFAVCTYVPTTLCDQMTGILATEVTADDAQKLLVGLNQRIVVNGRTQRNTNTMKNYLLPLVAQALAKWAKEAKQDMEDERPLNERQRTLTCLCCWAFKRNKRHAIYKRPDTQSIVKVPCEFTSFPLVSLWSAGMSISLRQKLKMMLQARQPTQIAAVTEELIQEAAAVEQEAVDTANAELDHAAWPSIVDTTERHVEVEVEELDQRAGEGVVETPRNSIKVSTQIGDALIGSYLILSPQAVLRSEKLACIHDLAEQVKLVTHSGRSGRYAVDKYXGRVLVPTGVAIDIQSFQALSESATLVYNEREFVNRKLWHIAVYGAALNTDEEGYEKVPVERAESDYVFDVDQKMCLKKEQASGWVLCGELVNPPFHEFAYEGLRTRPSAPYKVHTVGVYGVPGSGKSAIIKNTVTMSDLVLSGKKENCLEIMNDVLKHRALRITAKTVDSVLLNGVKHTPNILYIDEAFSCHAGTLLATIAIVRPKQKVVLCGDPKQCGFFNMMQLKVNYNHDICSEVFHKSISRRCTQDITAIVSKLHYQDRMRTTNPRKGDIIIDTTGTTKPAKTDLILTCFRGWVKQLQQDYRGNEVMTAAASQGLTRASVYAVRTKVNENPLYAQTSEHVNVLLTRTENKLVWKTLSTDPWIKTLTNPPRGHYTATIAEWEAEHQGIMKAIQGYAPPVNTFMNKVNVCWAKTLTPVLETAGISLSAEDWSELLPPFAQDVAYSPEVALNIICTKMYGFDLDTGLFSRPSVPMTYTKDHWDNRVGGKMYGFSQQAYDQLARRHPYLRGREKSGMQIVVTEMRIQRPRSDANIIPINRRLPHSLVATHEYRRAARAEEFFTTTRGYTMLLVSEYNMNLPNKKITWLAPIGTQGAHHTANLNLGIPPLLGSFDAVVVNMPTPFRNHHYQQCEDHAMKLQMLAGDALRHIKPGGSLWVKAYGYADRHSEHVVLALARKFKSFRVTQPSCVTSNTEVFLHFSIFDNGKRAIALHSANRKANSIFQNTFLPAGSAPAYRVKRGDISNAPEDAVVNAANQQGVKGAGVCGAIYRKWPDAFGDVATPTGTAVSKSVQDKLVIHAVGPNFSKCSEEEGDRDLASAYRAAAEIVMDKKITTVAVPLLSTGIYAGGKNRVEQSLNHLFTAFDNTDADVTIYCMDKTWEKKIKEAIDHRTSVEMVQDDVQLEEELVRVHPLSSLAGRKGYSTDSGRVFSYLEGTKFHQTAVDIAEMQVLWPALKESNEQIVAYTLGESMDQIRGKCPTEDTDASTPPRTVPCLCRYAMTPERVYRLKCTNTTQFTVCSSFELPKYHIQGVQRVKCERIIILDPTVPPTYKRPCIRRYPSTISCNSSEDSRSLSTFSVSSDSSIGSLPVGDTRPIPAPRTIFRPVPAPRAPVLRTTPPPKPPRTFTVRAEVHQAPPTPVPPPRPKRAAKLAREMHPGFTFGDFGEHEVEELTASPLTFGDFAEGEIQGMGVEFEXLGRAGGYIFSSDTGPGHLQQRSVLQNCTAECIYEPAKLEKIHAPKLDKTKEDILRSKYQMKPSEANKSRYQSRKVENMKAEIVGRLLDGLGEYLGTEHPVECYRITYPVPIYSTSDLRGLSSAKTAVRACNAFLEANFPSVTSYKITDEYDAYLDMVDGSESCLDRSSFSPSRLRSFPKTHSYLDPQINSAVPSPFQNTLQNVLAAATKRNCNVTQMRELPTYDSAVLNVEAFRKYACKPDVWDEYRDNPICITTENVTTYVAKLKGPKAAALFAKTHNLIPLHQVPMDKFTVDMKRDVKVTPGTKHTEERPKVQVIQAAEPLATAYLCGIHRELVRRLNNALFPNIHTLFDMSAEDFDAIIAEHFKHGDHVLETDIASFDKSQDDSMALTALMILEDLGVDQNLMNLIEAAFGEIVSTHLPTGTRFKFGAMMKSGMFLTLFVNTILNVVIACRVLEDQLAQSPWPAFIGDDNIIHGIISDKLMADRCATWMNMEVKILDSIVGIRPPYFCGGFIVCDDVTGTACRVADPLKRLFKLGKPLPLDDGQDEDRRRALHDEVKTWSRVGLRHRVCEAIEDRYAVHSSELVLLALTTLSKNLKSFRNIRGKPIHLYGGPK.

Residues 30–257 (EAVQTTPNDH…ESRKLLQSWH (228 aa)) enclose the Alphavirus-like MT domain. The interval 242-261 (GSTLYTESRKLLQSWHLPST) is nsP1 membrane-binding. S-palmitoyl cysteine; by host attachment occurs at residues C415 and C417. The (+)RNA virus helicase ATP-binding domain maps to 688–840 (ELVNPPFHEF…HDICSEVFHK (153 aa)). Position 719–726 (719–726 (GVPGSGKS)) interacts with a ribonucleoside 5'-triphosphate. In terms of domain architecture, (+)RNA virus helicase C-terminal spans 841 to 989 (SISRRCTQDI…IAEWEAEHQG (149 aa)). In terms of domain architecture, Peptidase C9 spans 1002–1325 (NTFMNKVNVC…RKANSIFQNT (324 aa)). A nucleolus localization signal region spans residues 1003–1022 (TFMNKVNVCWAKTLTPVLET). The active-site For cysteine protease nsP2 activity is the C1011. The Nuclear export signal motif lies at 1056-1065 (TKMYGFDLDT). The active-site For cysteine protease nsP2 activity is the H1081. A Nuclear localization signal motif is present at residues 1180–1184 (PNKKI). In terms of domain architecture, Macro spans 1332–1491 (APAYRVKRGD…KIKEAIDHRT (160 aa)). ADP-D-ribose contacts are provided by D1341, N1355, G1363, G1443, I1444, and Y1445. Positions 1593, 1595, 1618, and 1636 each coordinate Zn(2+). The interval 1681-1720 (DSSIGSLPVGDTRPIPAPRTIFRPVPAPRAPVLRTTPPPK) is disordered. 2 short sequence motifs (FGDF; binding to host G3BP1) span residues 1760–1763 (FGDF) and 1778–1781 (FGDF). A RdRp catalytic domain is found at 2165–2280 (DHVLETDIAS…HGIISDKLMA (116 aa)).

Interacts with non-structural protein 3. Interacts with RNA-directed RNA polymerase nsP4. Interacts with protease nsP2. interacts with itself. In terms of assembly, interacts with mRNA-capping enzyme nsP1. Interacts with host DDX1. Interacts with host DDX3. Interacts (via C-terminus) with host G3BP1; this interaction inhibits the formation of host stress granules on viral mRNAs and the nsp3-G3BP1 complexes bind viral RNAs and probably orchestrate the assembly of viral replication complexes. Interacts (via C-terminus) with host G3BP2; this interaction inhibits the formation of host stress granules on viral mRNAs and the nsp3-G3BP2 complexes bind viral RNAs and probably orchestrate the assembly of viral replication complexes. As to quaternary structure, interacts with mRNA-capping enzyme nsP1. Interacts with protease nsP2. interacts with itself. Interacts with RNA-directed RNA polymerase nsP4. Interacts with mRNA-capping enzyme nsP1. Interacts with KPNA1/karyopherin-alpha1; this interaction probably allows the active transport of protease nsP2 into the host nucleus. Requires Mg(2+) as cofactor. Mn(2+) serves as cofactor. Specific enzymatic cleavages in vivo yield mature proteins. The processing of the polyprotein is temporally regulated. In early stages (1.7 hpi), P1234 is first cleaved in trans through its nsP2 protease activity, releasing P123' and nsP4, which associate to form the early replication complex. At the same time, P1234 is also cut at the nsP1/nsP2 site early in infection but with lower efficiency. After replication of the viral minus-strand RNAs (4 hpi), the polyproteins are cut at the nsP1/nsP2 and nsP2/nsP3 sites very efficiently, preventing accumulation of P123' and P1234 and allowing the formation of the late replication complex. NsP3'/nsP4 site is not cleaved anymore and P34 is produced rather than nsP4. Post-translationally, specific enzymatic cleavages in vivo yield mature proteins. The processing of the polyprotein is temporally regulated. In early stages (1.7 hpi), P123 is cleaved at the nsP1/nsP2 site with low efficiency. After replication of the viral minus-strand RNAs (4 hpi), the polyproteins are cut at the nsP1/nsP2 and nsP2/nsP3 sites very efficiently, preventing accumulation of P123 and allowing the formation of the late replication complex. In terms of processing, specific enzymatic cleavages in vivo yield mature proteins. The processing of the polyprotein is temporally regulated. In early stages (1.7 hpi), P123' is cleaved at the nsP1/nsP2 site with low efficiency. After replication of the viral minus-strand RNAs (4 hpi), the polyproteins are cut at the nsP1/nsP2 and nsP2/nsP3 sites very efficiently, preventing accumulation of P123' and allowing the formation of the late replication complex. Palmitoylated by host palmitoyltransferases ZDHHC2 and ZDHHC19. Post-translationally, phosphorylated by host on serines and threonines. In terms of processing, ubiquitinated; targets the protein for rapid degradation via the ubiquitin system. Nsp4 is present in extremely low quantities due to low frequency of translation through the amber stop-codon and the degradation by the ubiquitin pathway.

It localises to the host cytoplasmic vesicle membrane. The protein localises to the host cell membrane. Its subcellular location is the host cell projection. The protein resides in the host filopodium. It is found in the host nucleus. It localises to the host cytoplasm. It carries out the reaction GTP + S-adenosyl-L-methionine = N(7)-methyl-GTP + S-adenosyl-L-homocysteine. The catalysed reaction is N(7)-methyl-GTP + L-histidyl-[protein] = N(tele)-(N(7)-methylguanosine 5'-phospho)-L-histidyl-[protein] + diphosphate. It catalyses the reaction N(tele)-(N(7)-methylguanosine 5'-phospho)-L-histidyl-[protein] + a 5'-end diphospho-(purine-ribonucleoside) in mRNA + H(+) = a 5'-end (N(7)-methyl 5'-triphosphoguanosine)-(purine-ribonucleoside) in mRNA + L-histidyl-[protein]. The enzyme catalyses a 5'-end triphospho-ribonucleoside in mRNA + H2O = a 5'-end diphospho-ribonucleoside in mRNA + phosphate + H(+). It carries out the reaction a ribonucleoside 5'-triphosphate + H2O = a ribonucleoside 5'-diphosphate + phosphate + H(+). The catalysed reaction is ATP + H2O = ADP + phosphate + H(+). It catalyses the reaction RNA(n) + a ribonucleoside 5'-triphosphate = RNA(n+1) + diphosphate. The enzyme catalyses RNA(n) + ATP = RNA(n)-3'-adenine ribonucleotide + diphosphate. It carries out the reaction 4-O-(ADP-D-ribosyl)-L-aspartyl-[protein] + H2O = L-aspartyl-[protein] + ADP-D-ribose + H(+). The catalysed reaction is 5-O-(ADP-D-ribosyl)-L-glutamyl-[protein] + H2O = L-glutamyl-[protein] + ADP-D-ribose + H(+). It catalyses the reaction ADP-alpha-D-ribose 1''-phosphate + H2O = ADP-D-ribose + phosphate. Inactive precursor of the viral replicase, which is activated by cleavages carried out by the viral protease nsP2. In terms of biological role, the early replication complex formed by the polyprotein P123 and nsP4 synthesizes minus-strand RNAs. As soon P123 is cleaved into mature proteins, the plus-strand RNAs synthesis begins. Functionally, the early replication complex formed by the polyprotein P123' and nsP4 synthesizes minus-strand RNAs. Polyprotein P123' is a short-lived polyprotein that accumulates during early stage of infection. As soon P123' is cleaved into mature proteins, the plus-strand RNAs synthesis begins. Its function is as follows. Cytoplasmic capping enzyme that catalyzes two virus-specific reactions: methyltransferase and nsP1 guanylyltransferase. mRNA-capping is necessary since all viral RNAs are synthesized in the cytoplasm, and host capping enzymes are restricted to the nucleus. The enzymatic reaction involves a covalent link between 7-methyl-GMP and nsP1, whereas eukaryotic capping enzymes form a covalent complex only with GMP. nsP1 capping consists in the following reactions: GTP is first methylated into 7-methyl-GMP and then is covalently linked to nsP1 to form the m7GMp-nsP1 complex from which 7-methyl-GMP complex is transferred to the mRNA to create the cap structure. NsP1 is needed for the initiation of the minus-strand RNAs synthesis. Probably serves as a membrane anchor for the replication complex composed of nsP1-nsP4. Palmitoylated nsP1 is remodeling host cell cytoskeleton, and induces filopodium-like structure formation at the surface of the host cell. Multifunctional protein whose N-terminus is part of the RNA polymerase complex and displays NTPase, RNA triphosphatase and helicase activities. NTPase and RNA triphosphatase are involved in viral RNA capping and helicase keeps a check on the dsRNA replication intermediates. The C-terminus harbors a protease that specifically cleaves the polyproteins and releases the mature proteins. Required for the shutoff of minus-strand RNAs synthesis. Specifically inhibits the host IFN response by promoting the nuclear export of host STAT1. Also inhibits host transcription by inducing rapid proteasome-dependent degradation of POLR2A, a catalytic subunit of the RNAPII complex. The resulting inhibition of cellular protein synthesis serves to ensure maximal viral gene expression and to evade host immune response. In terms of biological role, seems to be essential for minus-strand RNAs and subgenomic 26S mRNAs synthesis. Displays mono-ADP-ribosylhydrolase activity. ADP-ribosylation is a post-translational modification that controls various processes of the host cell and the virus probably needs to revert it for optimal viral replication. Binds proteins of FXR family and sequesters them into the viral RNA replication complexes thereby inhibiting the formation of host stress granules on viral mRNAs. The nsp3-FXR complexes bind viral RNAs and probably orchestrate the assembly of viral replication complexes, thanks to the ability of FXR family members to self-assemble and bind DNA. Functionally, seems to be essential for minus-strand RNAs and subgenomic 26S mRNAs synthesis. Displays mono-ADP-ribosylhydrolase activity. ADP-ribosylation is a post-translantional modification that controls various processes of the host cell and the virus probably needs to revert it for optimal viral replication. Binds proteins of G3BP family and sequesters them into the viral RNA replication complexes thereby inhibiting the formation of host stress granules on viral mRNAs. The nsp3'-G3BP complexes bind viral RNAs and probably orchestrate the assembly of viral replication complexes, thanks to the ability of G3BP family members to self-assemble and bind DNA. Its function is as follows. RNA dependent RNA polymerase. Replicates genomic and antigenomic RNA by recognizing replications specific signals. The early replication complex formed by the polyprotein P123 and nsP4 synthesizes minus-strand RNAs. The late replication complex composed of fully processed nsP1-nsP4 is responsible for the production of genomic and subgenomic plus-strand RNAs. The core catalytic domain of nsP4 also possesses terminal adenylyltransferase (TATase) activity that is probably involved in maintenance and repair of the poly(A) tail, an element required for replication of the viral genome. The sequence is that of Polyprotein P1234 from Barmah forest virus (BFV).